A 198-amino-acid chain; its full sequence is Transcription antitermination protein NusB (198 aa).

The protein belongs to the NusB family.

In terms of biological role, involved in transcription antitermination. Required for transcription of ribosomal RNA (rRNA) genes. Binds specifically to the boxA antiterminator sequence of the ribosomal RNA (rrn) operons. The polypeptide is Transcription antitermination protein NusB (Methylococcus capsulatus (strain ATCC 33009 / NCIMB 11132 / Bath)).